The following is a 152-amino-acid chain: Protein-export protein SecB (152 aa).

The protein belongs to the SecB family. As to quaternary structure, homotetramer, a dimer of dimers. One homotetramer interacts with 1 SecA dimer.

It localises to the cytoplasm. In terms of biological role, one of the proteins required for the normal export of preproteins out of the cell cytoplasm. It is a molecular chaperone that binds to a subset of precursor proteins, maintaining them in a translocation-competent state. It also specifically binds to its receptor SecA. This Rickettsia conorii (strain ATCC VR-613 / Malish 7) protein is Protein-export protein SecB.